A 232-amino-acid polypeptide reads, in one-letter code: Recombination protein RecR (232 aa).

The C4-type zinc finger occupies 92 to 107; that stretch reads CQVCFHLSAEPVCDIC. In terms of domain architecture, Toprim spans 115-209; the sequence is SVICVVSDPR…KVTRIAFGLP (95 aa).

It belongs to the RecR family.

Functionally, may play a role in DNA repair. It seems to be involved in an RecBC-independent recombinational process of DNA repair. It may act with RecF and RecO. This is Recombination protein RecR from Synechocystis sp. (strain ATCC 27184 / PCC 6803 / Kazusa).